The sequence spans 466 residues: Bifunctional protein GlmU (466 aa).

A pyrophosphorylase region spans residues 1–233; that stretch reads MLHKSVLGLV…ADEAMGANDR (233 aa). UDP-N-acetyl-alpha-D-glucosamine is bound by residues 11–14, Lys25, Gln79, and 84–85; these read LAAG and GT. Asp108 is a binding site for Mg(2+). Positions 143, 158, 173, and 231 each coordinate UDP-N-acetyl-alpha-D-glucosamine. Asn231 is a binding site for Mg(2+). Residues 234–254 are linker; the sequence is AQLAALEAVYRQRKVQELFAQ. The N-acetyltransferase stretch occupies residues 255 to 466; it reads GVTLIDPNRI…QKKKEHKNDA (212 aa). Positions 337 and 355 each coordinate UDP-N-acetyl-alpha-D-glucosamine. The active-site Proton acceptor is the His367. UDP-N-acetyl-alpha-D-glucosamine is bound by residues Tyr370 and Asn381. Acetyl-CoA-binding positions include Ala384, 390–391, Ser409, Ala427, and Arg444; that span reads NY.

In the N-terminal section; belongs to the N-acetylglucosamine-1-phosphate uridyltransferase family. This sequence in the C-terminal section; belongs to the transferase hexapeptide repeat family. In terms of assembly, homotrimer. Mg(2+) is required as a cofactor.

It is found in the cytoplasm. It carries out the reaction alpha-D-glucosamine 1-phosphate + acetyl-CoA = N-acetyl-alpha-D-glucosamine 1-phosphate + CoA + H(+). The enzyme catalyses N-acetyl-alpha-D-glucosamine 1-phosphate + UTP + H(+) = UDP-N-acetyl-alpha-D-glucosamine + diphosphate. It functions in the pathway nucleotide-sugar biosynthesis; UDP-N-acetyl-alpha-D-glucosamine biosynthesis; N-acetyl-alpha-D-glucosamine 1-phosphate from alpha-D-glucosamine 6-phosphate (route II): step 2/2. The protein operates within nucleotide-sugar biosynthesis; UDP-N-acetyl-alpha-D-glucosamine biosynthesis; UDP-N-acetyl-alpha-D-glucosamine from N-acetyl-alpha-D-glucosamine 1-phosphate: step 1/1. Its pathway is bacterial outer membrane biogenesis; LPS lipid A biosynthesis. Catalyzes the last two sequential reactions in the de novo biosynthetic pathway for UDP-N-acetylglucosamine (UDP-GlcNAc). The C-terminal domain catalyzes the transfer of acetyl group from acetyl coenzyme A to glucosamine-1-phosphate (GlcN-1-P) to produce N-acetylglucosamine-1-phosphate (GlcNAc-1-P), which is converted into UDP-GlcNAc by the transfer of uridine 5-monophosphate (from uridine 5-triphosphate), a reaction catalyzed by the N-terminal domain. The protein is Bifunctional protein GlmU of Dichelobacter nodosus (strain VCS1703A).